Consider the following 151-residue polypeptide: MKKIDIKILDPRVGNEFPLPTYATEGSAGLDLRACLSEAVDLLPGQTTLLPTGLAIHIGDSSLAAVILPRSGLGHKHGVVLGNLVGLIDSDYQGQLMVSVWNRGQQPFTIEPGERIAQMVFVPVIQAEFNLVEDFDLSERGTGGFGHSGRQ.

Substrate-binding positions include 70–72 (RSG), asparagine 83, 87–89 (LID), and methionine 97.

The protein belongs to the dUTPase family. The cofactor is Mg(2+).

It carries out the reaction dUTP + H2O = dUMP + diphosphate + H(+). The protein operates within pyrimidine metabolism; dUMP biosynthesis; dUMP from dCTP (dUTP route): step 2/2. Functionally, this enzyme is involved in nucleotide metabolism: it produces dUMP, the immediate precursor of thymidine nucleotides and it decreases the intracellular concentration of dUTP so that uracil cannot be incorporated into DNA. The chain is Deoxyuridine 5'-triphosphate nucleotidohydrolase from Yersinia enterocolitica serotype O:8 / biotype 1B (strain NCTC 13174 / 8081).